The primary structure comprises 490 residues: Aspartyl/glutamyl-tRNA(Asn/Gln) amidotransferase subunit B (490 aa).

This sequence belongs to the GatB/GatE family. GatB subfamily. In terms of assembly, heterotrimer of A, B and C subunits.

It catalyses the reaction L-glutamyl-tRNA(Gln) + L-glutamine + ATP + H2O = L-glutaminyl-tRNA(Gln) + L-glutamate + ADP + phosphate + H(+). The catalysed reaction is L-aspartyl-tRNA(Asn) + L-glutamine + ATP + H2O = L-asparaginyl-tRNA(Asn) + L-glutamate + ADP + phosphate + 2 H(+). Allows the formation of correctly charged Asn-tRNA(Asn) or Gln-tRNA(Gln) through the transamidation of misacylated Asp-tRNA(Asn) or Glu-tRNA(Gln) in organisms which lack either or both of asparaginyl-tRNA or glutaminyl-tRNA synthetases. The reaction takes place in the presence of glutamine and ATP through an activated phospho-Asp-tRNA(Asn) or phospho-Glu-tRNA(Gln). The chain is Aspartyl/glutamyl-tRNA(Asn/Gln) amidotransferase subunit B from Burkholderia mallei (strain NCTC 10247).